A 928-amino-acid polypeptide reads, in one-letter code: BCAS3 microtubule associated cell migration factor (928 aa).

Methionine 1 is modified (N-acetylmethionine). The WD repeat unit spans residues 69–114 (DLNDTSRNLEFHEIHSTGNEPPLLIMIGYSDGMQVWSIPISGEAQE). Residue lysine 215 forms a Glycyl lysine isopeptide (Lys-Gly) (interchain with G-Cter in SUMO1); alternate linkage. Lysine 215 is covalently cross-linked (Glycyl lysine isopeptide (Lys-Gly) (interchain with G-Cter in SUMO2); alternate). Required for recruitment to preautophagosomal structure in response to mitophagy stretches follow at residues 254–312 (RGGA…SRRS) and 437–560 (YGGQ…IKAP). Phosphoserine is present on residues serine 461, serine 480, and serine 488. Disordered stretches follow at residues 472–515 (TSKQ…PGNP) and 755–777 (TTVISSSSSVLQSHGPSDTPQPL). Composition is skewed to low complexity over residues 480 to 494 (SPVPGLSSSPSGSPL), 505 to 514 (NNFTNNNPGN), and 755 to 771 (TTVISSSSSVLQSHGPS). A phosphoserine mark is found at serine 838, serine 886, and serine 898. The disordered stretch occupies residues 868-928 (ESPSRDVVGS…PLSLFPTGFP (61 aa)). The span at 887–901 (IETLSNSSGSTSGSI) shows a compositional bias: low complexity.

The protein belongs to the BCAS3 family. Interacts with histone H3, ESR1, KAT2B and PELP1; the interactions occur in a estrogen-dependent manner. Interacts with beta-tubulin and VIM. Interacts (via C-terminal) with PHAF1; the interaction is requrired for the association with the phagophore. In terms of tissue distribution, expressed in stomach, liver, lung, kidney, prostate, testis, thyroid gland, adrenal gland, brain, heart, skeletal muscle, colon, spleen, small intestine, placenta, blood leukocyte and mammary epithelial cells. Expressed in undifferentiated ES cells. Expressed in blood islands and nascent blood vessels derived from differentiated ES cells into embryoid bodies (BD). Expressed in endothelial cells. Not detected in brain. Expressed in brain tumors (at protein level). Expressed in brain. Highly expressed in breast cancers and in glioma cell lines.

It localises to the nucleus. It is found in the cytoplasm. Its subcellular location is the cytoskeleton. The protein resides in the preautophagosomal structure. Plays a role in angiogenesis. Participates in the regulation of cell polarity and directional endothelial cell migration by mediating both the activation and recruitment of CDC42 and the reorganization of the actin cytoskeleton at the cell leading edge. Promotes filipodia formation. Functions synergistically with PELP1 as a transcriptional coactivator of estrogen receptor-responsive genes. Stimulates histone acetyltransferase activity. Binds to chromatin. Plays a regulatory role in autophagic activity. In complex with PHAF1, associates with the preautophagosomal structure during both non-selective and selective autophagy. Probably binds phosphatidylinositol 3-phosphate (PtdIns3P) which would mediate the recruitment preautophagosomal structures. The protein is BCAS3 microtubule associated cell migration factor of Homo sapiens (Human).